A 262-amino-acid chain; its full sequence is Homeobox protein vent1 (262 aa).

Basic and acidic residues-rich tracts occupy residues 16 to 26 and 44 to 55; these read REEAPDGKDSV and YAKEIPRRKDGQ. Residues 16-129 are disordered; sequence REEAPDGKDS…KSPKSDLQRR (114 aa). A compositionally biased stretch (polar residues) spans 58–79; it reads GEITSFQCSSEEARNRQFSNPS. The span at 114–128 shows a compositional bias: basic and acidic residues; sequence DTEHRSKSPKSDLQR. The segment at residues 127–186 is a DNA-binding region (homeobox); it reads QRRLRTAFTPQQITRLEQAFNKQRYLGASERKKLATSLQLSEIQVKTWFQNRRMKLKRQI.

Its subcellular location is the nucleus. Transcriptional repressor. Cooperates with vent2 in a ventral signaling pathway downstream of bmp4, which antagonizes the Spemann organizer and dorsal mesoderm formation, and leads to ventral mesoderm formation. Acts downstream of bmp4 to repress transcription of foxa4-B/XFD-1'. Binds to DNA with preference for the target sequence 5'-CTATT[T/C]G-3'. Also binds 5'-TGCATTTTG-3' at a lower frequency, and occasionally 5'-TTGATC-3'. Binds to the homeobox 2 (HBX2) repressor element in the promoter of the myf5 gene. Cooperates with vent2 to repress myf5 expression in the ventral domain. The sequence is that of Homeobox protein vent1 from Xenopus tropicalis (Western clawed frog).